The sequence spans 163 residues: Large ribosomal subunit protein bL17 (163 aa).

Residues 123–135 are compositionally biased toward low complexity; it reads AEASRATRASASK. The interval 123-163 is disordered; that stretch reads AEASRATRASASKKAAEEAETEEVVEAPAEETATEEAAEEK. Residues 140–163 are compositionally biased toward acidic residues; it reads EAETEEVVEAPAEETATEEAAEEK.

Belongs to the bacterial ribosomal protein bL17 family. Part of the 50S ribosomal subunit. Contacts protein L32.

This is Large ribosomal subunit protein bL17 from Corynebacterium glutamicum (strain ATCC 13032 / DSM 20300 / JCM 1318 / BCRC 11384 / CCUG 27702 / LMG 3730 / NBRC 12168 / NCIMB 10025 / NRRL B-2784 / 534).